The chain runs to 374 residues: Double homeobox protein 4C (374 aa).

Over residues 1 to 10 (MALPTPSDST) the composition is skewed to polar residues. Disordered stretches follow at residues 1–24 (MALP…RRRL), 72–102 (SRQL…TAVT), and 218–374 (LQPS…YELL). DNA-binding regions (homeobox) lie at residues 19–78 (GRRR…LRQH) and 94–153 (GRRK…PGQG). Over residues 265 to 274 (KSREDRDPQR) the composition is skewed to basic and acidic residues. 2 stretches are compositionally biased toward low complexity: residues 278–302 (PGPC…LAPP) and 319–329 (AGAAWEPQAGA). Over residues 354–374 (QPLQEPGRSSTVTSSLLYELL) the composition is skewed to polar residues.

In terms of assembly, may interact with MYF5; regulates MYF5 expression. Expressed in muscles, as well as in primary myoblasts and myotubes (at protein level).

The protein resides in the nucleus. The protein localises to the cytoplasm. Functionally, down-regulates MYOD1 expression and may up-regulate MYF5 expression. May regulate microRNA (miRNA) transcription, up-regulating the expression of some myogenic miRNAs, including MIR1-1, MIR133A2, MIR133B and MIR206. Impairs the differentiation of myoblasts and may be involved in muscle regeneration. Reduces DUX4-induced nuclear localization of CTNNB1/beta-catenin and its subsequent activation of target genes. The sequence is that of Double homeobox protein 4C (DUX4L9) from Homo sapiens (Human).